The sequence spans 508 residues: 2-isopropylmalate synthase (508 aa).

A Pyruvate carboxyltransferase domain is found at 5-267 (IKIFDTTLRD…THRIDTTQIY (263 aa)). 4 residues coordinate Mn(2+): Asp14, His202, His204, and Asn238. The regulatory domain stretch occupies residues 390-508 (VIDSFQINSG…SEIGESIISQ (119 aa)).

This sequence belongs to the alpha-IPM synthase/homocitrate synthase family. LeuA type 1 subfamily. Homodimer. The cofactor is Mn(2+).

Its subcellular location is the cytoplasm. The catalysed reaction is 3-methyl-2-oxobutanoate + acetyl-CoA + H2O = (2S)-2-isopropylmalate + CoA + H(+). It participates in amino-acid biosynthesis; L-leucine biosynthesis; L-leucine from 3-methyl-2-oxobutanoate: step 1/4. Catalyzes the condensation of the acetyl group of acetyl-CoA with 3-methyl-2-oxobutanoate (2-ketoisovalerate) to form 3-carboxy-3-hydroxy-4-methylpentanoate (2-isopropylmalate). This is 2-isopropylmalate synthase from Ruminiclostridium cellulolyticum (strain ATCC 35319 / DSM 5812 / JCM 6584 / H10) (Clostridium cellulolyticum).